Consider the following 234-residue polypeptide: Ribosomal RNA small subunit methyltransferase G (234 aa).

S-adenosyl-L-methionine is bound by residues Gly96, Leu101, 119–121 (DAT), 147–148 (VE), and Arg161.

It belongs to the methyltransferase superfamily. RNA methyltransferase RsmG family.

It localises to the cytoplasm. Its function is as follows. Specifically methylates the N7 position of a guanine in 16S rRNA. The sequence is that of Ribosomal RNA small subunit methyltransferase G from Chlorobium chlorochromatii (strain CaD3).